Here is a 163-residue protein sequence, read N- to C-terminus: MQHNLDEFKELFETMIYTNSELRNLMALIYSSDIKTSKEYFNETNWSNTKNIILSVIKSIKLFDFFHQIQGFCCNLYGSGNIWGRIRFCRLDKINCVPNNPQWITPNDLEMEKFISDNQRVSSKEFRSKALKVISQKYIENHQKEINEHVEKLRTLHKELRYI.

The stretch at 136 to 161 (QKYIENHQKEINEHVEKLRTLHKELR) forms a coiled coil.

This is an uncharacterized protein from Acanthamoeba polyphaga (Amoeba).